We begin with the raw amino-acid sequence, 331 residues long: Low affinity immunoglobulin epsilon Fc receptor (331 aa).

Topologically, residues methionine 1–glycine 23 are cytoplasmic. S-palmitoyl cysteine attachment occurs at residues cysteine 17 and cysteine 18. Residues threonine 24–tryptophan 49 traverse the membrane as a helical; Signal-anchor for type II membrane protein segment. Over glutamate 50–proline 331 the chain is Extracellular. Asparagine 65 is a glycosylation site (N-linked (GlcNAc...) asparagine). Repeats lie at residues lysine 71–serine 91, glutamine 92–serine 112, and glutamine 113–serine 133. Residue asparagine 114 is glycosylated (N-linked (GlcNAc...) asparagine). Intrachain disulfides connect cysteine 183-cysteine 311, cysteine 186-cysteine 197, cysteine 214-cysteine 305, and cysteine 282-cysteine 296. The region spanning isoleucine 185 to serine 298 is the C-type lectin domain. Positions 272, 292, and 293 each coordinate Ca(2+). O-linked (Xyl...) (chondroitin sulfate) serine glycosylation occurs at serine 319.

In terms of assembly, homotrimer. Interacts (via C-type lectin domain) with IGHE (via CH3 region); this interaction regulates IgE homeostasis. Interacts (via C-terminus) with CR2/CD21 (via Sushi domain 1 and 2). N- and O-glycosylated.

It localises to the cell membrane. It is found in the secreted. Low-affinity receptor for immunoglobulin E (IgE) and CR2/CD21. Has essential roles in the regulation of IgE production and in the differentiation of B cells. On B cells, initiates IgE-dependent antigen uptake and presentation to T cells. On macrophages, upon IgE binding and antigen cross-linking induces intracellular killing of parasites through activation of L-Arginine-nitric oxide pathway. This is Low affinity immunoglobulin epsilon Fc receptor (Fcer2) from Mus musculus (Mouse).